We begin with the raw amino-acid sequence, 350 residues long: ADP-ribosylhydrolase ARH3 (350 aa).

Mg(2+) contacts are provided by glutamate 27, threonine 57, aspartate 58, and aspartate 59. Position 58 (aspartate 58) interacts with substrate. Substrate contacts are provided by residues 127-133 (KGSYGNG), histidine 163, leucine 216, and isoleucine 252. Aspartate 295, aspartate 297, and threonine 298 together coordinate Mg(2+).

The protein belongs to the ADP-ribosylglycohydrolase family. In terms of assembly, monomer. Mg(2+) is required as a cofactor.

Its subcellular location is the nucleus. It is found in the cytoplasm. It localises to the chromosome. The protein resides in the mitochondrion matrix. The enzyme catalyses [(1''-&gt;2')-ADP-alpha-D-ribose](n) + H2O = [(1''-&gt;2')-ADP-alpha-D-ribose](n-1) + ADP-D-ribose. The catalysed reaction is 1''-O-acetyl-ADP-alpha-D-ribose + H2O = ADP-D-ribose + acetate + H(+). It carries out the reaction O-(ADP-D-ribosyl)-L-seryl-[protein] + H2O = ADP-D-ribose + L-seryl-[protein]. It catalyses the reaction alpha-NAD(+) + H2O = ADP-D-ribose + nicotinamide + H(+). Its activity is regulated as follows. The protein undergoes a dramatic conformational switch from closed to open states upon substrate-binding, which enables specific substrate recognition for the 1''-O-linkage. The glutamate flap (Glu-27) blocks substrate entrance to Mg(2+) in the unliganded closed state. In presence of substrate, Glu-27 is ejected from the active site: this closed-to-open transition significantly widens the substrate-binding channel and precisely positions the scissile 1''-O-linkage for cleavage while securing tightly 2'- and 3'-hydroxyls of ADP-ribose. Its function is as follows. ADP-ribosylhydrolase that preferentially hydrolyzes the scissile alpha-O-linkage attached to the anomeric C1'' position of ADP-ribose and acts on different substrates, such as proteins ADP-ribosylated on serine and threonine, free poly(ADP-ribose) and O-acetyl-ADP-D-ribose. Specifically acts as a serine mono-ADP-ribosylhydrolase by mediating the removal of mono-ADP-ribose attached to serine residues on proteins, thereby playing a key role in DNA damage response. Serine ADP-ribosylation of proteins constitutes the primary form of ADP-ribosylation of proteins in response to DNA damage. Does not hydrolyze ADP-ribosyl-arginine, -cysteine, -diphthamide, or -asparagine bonds. Also able to degrade protein free poly(ADP-ribose), which is synthesized in response to DNA damage: free poly(ADP-ribose) acts as a potent cell death signal and its degradation by ADPRHL2 protects cells from poly(ADP-ribose)-dependent cell death, a process named parthanatos. Also hydrolyzes free poly(ADP-ribose) in mitochondria. Specifically digests O-acetyl-ADP-D-ribose, a product of deacetylation reactions catalyzed by sirtuins. Specifically degrades 1''-O-acetyl-ADP-D-ribose isomer, rather than 2''-O-acetyl-ADP-D-ribose or 3''-O-acetyl-ADP-D-ribose isomers. The protein is ADP-ribosylhydrolase ARH3 (adprs) of Xenopus tropicalis (Western clawed frog).